The chain runs to 276 residues: Microtubule-associated protein RP/EB family member 1A (276 aa).

The Calponin-homology (CH) domain occupies 13-115 (FVGRNEILTW…FLQWLKRFCD (103 aa)). A disordered region spans residues 124-172 (ENYNPVERRSRNGKERSVKGSNKIPKSLQTNNNHPPPNSSSVGLSKASG). The span at 129–141 (VERRSRNGKERSV) shows a compositional bias: basic and acidic residues. Positions 162–172 (SSSVGLSKASG) are enriched in low complexity. The EB1 C-terminal domain occupies 173-243 (PKSAKAAEVQ…LYATDANESA (71 aa)). Residues 252 to 276 (NQSLGVEDDEAEGNGEQLEEEKTQA) form a disordered region. A compositionally biased stretch (acidic residues) spans 257 to 270 (VEDDEAEGNGEQLE).

Belongs to the MAPRE family. Homodimer and heterodimer with EB1B. Interacts with tobamovirus movement protein. In terms of tissue distribution, highly expressed in guard cells of leaf stomata, pollen grains and pollen tubes. Expressed in young roots.

It is found in the cytoplasm. It localises to the cytoskeleton. The protein resides in the spindle pole. Its subcellular location is the phragmoplast. Functionally, binds to the plus end of microtubules and regulates the dynamics of the microtubule cytoskeleton. May be involved in anchoring microtubules to their nucleation sites and/or functioning as a reservoir for distribution to the growing end. In plants, microtubule minus ends are not necessarily severed from the nucleation site and transported to the plus end of a microtubule as part of the recycling process. May play a role in endomembrane organization during polarized growth of plant cells. Interacts with the tobamovirus movement protein (MP) and may play a role in the association of MP with the microtubule system during infection. The polypeptide is Microtubule-associated protein RP/EB family member 1A (EB1A) (Arabidopsis thaliana (Mouse-ear cress)).